The following is a 252-amino-acid chain: Acetoacetate decarboxylase (252 aa).

K116 functions as the Schiff-base intermediate with acetoacetate in the catalytic mechanism.

Belongs to the ADC family.

The enzyme catalyses acetoacetate + H(+) = acetone + CO2. In terms of biological role, catalyzes the conversion of acetoacetate to acetone and carbon dioxide. The sequence is that of Acetoacetate decarboxylase from Paraburkholderia phytofirmans (strain DSM 17436 / LMG 22146 / PsJN) (Burkholderia phytofirmans).